The following is a 158-amino-acid chain: Cyclic pyranopterin monophosphate synthase (158 aa).

Substrate is bound by residues 75 to 77 (LCH) and 113 to 114 (ME). Residue aspartate 128 is part of the active site.

The protein belongs to the MoaC family. As to quaternary structure, homohexamer; trimer of dimers.

It catalyses the reaction (8S)-3',8-cyclo-7,8-dihydroguanosine 5'-triphosphate = cyclic pyranopterin phosphate + diphosphate. It functions in the pathway cofactor biosynthesis; molybdopterin biosynthesis. In terms of biological role, catalyzes the conversion of (8S)-3',8-cyclo-7,8-dihydroguanosine 5'-triphosphate to cyclic pyranopterin monophosphate (cPMP). In Actinobacillus succinogenes (strain ATCC 55618 / DSM 22257 / CCUG 43843 / 130Z), this protein is Cyclic pyranopterin monophosphate synthase.